The following is a 300-amino-acid chain: Fluorinase (300 aa).

S-adenosyl-L-methionine-binding positions include Asp-16, Asp-21 to Ser-23, Tyr-77, Ser-158, Asp-211, Asn-216, Ser-270 to Arg-271, and Arg-278 to Ala-280.

This sequence belongs to the SAM hydrolase / SAM-dependent halogenase family. As to quaternary structure, homohexamer.

The catalysed reaction is fluoride + S-adenosyl-L-methionine = 5'-deoxy-5'-fluoroadenosine + L-methionine. The enzyme catalyses chloride + S-adenosyl-L-methionine = 5'-chloro-5'-deoxyadenosine + L-methionine. Its activity is regulated as follows. Activity is severely inhibited by 1 mM Cu(2+) or Zn(2+). Functionally, catalyzes the formation of a C-F bond by combining S-adenosyl-L-methionine (SAM) and fluoride to generate 5'-fluoro-5'-deoxyadenosine (5'-FDA) and L-methionine. Probably involved in fluoroacetate (FAc) and 4-fluorothreonine (4-FT) biosynthesis. In vitro, can also catalyze the conversion of chloride and SAM to 5'-chloro-5'-deoxyadenosine (5'-CIDA) and L-methionine in the presence of L-amino acid oxidase. This is Fluorinase from Nocardia brasiliensis (strain ATCC 700358 / HUJEG-1).